The primary structure comprises 227 residues: uncharacterized protein (227 aa).

The signal sequence occupies residues M1 to A23.

This is an uncharacterized protein from Coxiella burnetii (strain RSA 493 / Nine Mile phase I).